The sequence spans 473 residues: Ion-translocating oxidoreductase complex subunit C (473 aa).

2 4Fe-4S ferredoxin-type domains span residues 328–357 and 368–396; these read KNESISEKTCIRCGYCSYVCPVNLLPQQLY and TKKHYVLDCIECKACEKVCPSYIPLVKYF. Residues C337, C340, C343, C347, C376, C379, C382, and C386 each contribute to the [4Fe-4S] cluster site.

It belongs to the 4Fe4S bacterial-type ferredoxin family. RnfC subfamily. As to quaternary structure, the complex is composed of six subunits: RnfA, RnfB, RnfC, RnfD, RnfE and RnfG. Requires [4Fe-4S] cluster as cofactor.

Its subcellular location is the cell inner membrane. Functionally, part of a membrane-bound complex that couples electron transfer with translocation of ions across the membrane. This is Ion-translocating oxidoreductase complex subunit C from Buchnera aphidicola subsp. Acyrthosiphon pisum (strain APS) (Acyrthosiphon pisum symbiotic bacterium).